A 132-amino-acid chain; its full sequence is Fibroblast growth factor 1 (132 aa).

Heparin contacts are provided by residues Asn10 and 108–120 (KTKPGSRTHFGQK).

Belongs to the heparin-binding growth factors family.

The protein localises to the secreted. The protein resides in the cytoplasm. It is found in the cell cortex. It localises to the cytosol. Its subcellular location is the nucleus. Functionally, plays an important role in the regulation of cell survival, cell division, angiogenesis, cell differentiation and cell migration. Functions as a potent mitogen in vitro. Acts as a ligand for FGFR1 and integrins. Binds to FGFR1 in the presence of heparin leading to FGFR1 dimerization and activation via sequential autophosphorylation on tyrosine residues which act as docking sites for interacting proteins, leading to the activation of several signaling cascades. Binds to integrins. Its binding to integrins and subsequent ternary complex formation with integrins and FGFR1 are essential for FGF1 signaling. This chain is Fibroblast growth factor 1 (fgf1), found in Notophthalmus viridescens (Eastern newt).